A 439-amino-acid polypeptide reads, in one-letter code: MTSNTPVSDQLFDRARSLMPGGVNSPVRAFGSVGGTPKFMVSAKGAYLTDADGKEYVDLVCSWGPALLGHAHPAVLDAVHAAVDRGLSFGASTPDEANLAAIVKDRVSAVERLRMVSTGTEATMTAVRLARGFTGRNLIIKFAGCYHGHLDGLLAAAGSGVATLALPGSAGVTEATAAETLVLPYNDLAAVEAAFAAHGKNIAAVITEAAPANMGVVTPGEGFNAGLSRITKEHGALLILDEVLTGFRTGYAGYWGLTGRQEGWAPDLLTFGKVIGGGMPTAALGGRADVMDYLAPVGPVYQAGTLSGNPVAMAAGVATLTNATPEVYAYVDARSLELSAALSSALDAAGVDHSIQRAGNLFSVAFGTSAHGVHNYDDAQRQESFRYAPFFHSMLDSGVYLPPSVFEAWFLSAAHDDAAMNRIVDALPAAAKAAAGASA.

Position 273 is an N6-(pyridoxal phosphate)lysine (K273).

The protein belongs to the class-III pyridoxal-phosphate-dependent aminotransferase family. HemL subfamily. In terms of assembly, homodimer. It depends on pyridoxal 5'-phosphate as a cofactor.

It localises to the cytoplasm. It carries out the reaction (S)-4-amino-5-oxopentanoate = 5-aminolevulinate. Its pathway is porphyrin-containing compound metabolism; protoporphyrin-IX biosynthesis; 5-aminolevulinate from L-glutamyl-tRNA(Glu): step 2/2. The protein is Glutamate-1-semialdehyde 2,1-aminomutase of Paenarthrobacter aurescens (strain TC1).